Consider the following 337-residue polypeptide: Thymidylate synthase (337 aa).

DUMP-binding positions include Arg74 and 199–200 (RR). Cys219 serves as the catalytic Nucleophile. DUMP-binding positions include 239–242 (RSGD), Asn250, and 280–282 (HIY). Asp242 contacts (6R)-5,10-methylene-5,6,7,8-tetrahydrofolate. Ala336 is a binding site for (6R)-5,10-methylene-5,6,7,8-tetrahydrofolate.

The protein belongs to the thymidylate synthase family. Homodimer.

It catalyses the reaction dUMP + (6R)-5,10-methylene-5,6,7,8-tetrahydrofolate = 7,8-dihydrofolate + dTMP. The protein operates within pyrimidine metabolism; dTTP biosynthesis. In Homo sapiens (Human), this protein is Thymidylate synthase (70).